The sequence spans 226 residues: Large ribosomal subunit protein uL1 (226 aa).

This sequence belongs to the universal ribosomal protein uL1 family. In terms of assembly, part of the 50S ribosomal subunit.

Binds directly to 23S rRNA. The L1 stalk is quite mobile in the ribosome, and is involved in E site tRNA release. Its function is as follows. Protein L1 is also a translational repressor protein, it controls the translation of the L11 operon by binding to its mRNA. The protein is Large ribosomal subunit protein uL1 of Borreliella burgdorferi (strain ZS7) (Borrelia burgdorferi).